A 302-amino-acid polypeptide reads, in one-letter code: MKKDFISILDISREELANLIAHARKLKEERRVGIQTPVLAHKTLGMIFEKSSTRTRISFEAGMFELGGHALFLNPKDMQLGRGEAIRDTARVMSRFVSAIMIRANRHDEVLELAAHADIPVINGLSDREHPCQILADIMTIEERLFRTEGVKVAWIGDGNNVCTSLILSTILTGMEVIVASPSEFAPGEDVVSEALRMGAKVRIVTDPREAATGADVVMTDTWISMGQEEEIDRRRQIFMPYQVNAELMACAKPGAIVMHCLPAHRNWEITDEVLDSKASAVWDQAENRLHAQKALLVRLLA.

Carbamoyl phosphate-binding positions include serine 52–threonine 55, glutamine 79, arginine 103, and histidine 130–glutamine 133. L-ornithine contacts are provided by residues asparagine 161, aspartate 221, and serine 225 to methionine 226. Carbamoyl phosphate is bound by residues cysteine 261 to leucine 262 and arginine 289.

Belongs to the aspartate/ornithine carbamoyltransferase superfamily. OTCase family.

The protein localises to the cytoplasm. It carries out the reaction carbamoyl phosphate + L-ornithine = L-citrulline + phosphate + H(+). It participates in amino-acid biosynthesis; L-arginine biosynthesis; L-arginine from L-ornithine and carbamoyl phosphate: step 1/3. Functionally, reversibly catalyzes the transfer of the carbamoyl group from carbamoyl phosphate (CP) to the N(epsilon) atom of ornithine (ORN) to produce L-citrulline. The protein is Ornithine carbamoyltransferase of Methanospirillum hungatei JF-1 (strain ATCC 27890 / DSM 864 / NBRC 100397 / JF-1).